Reading from the N-terminus, the 367-residue chain is Protein SUPPRESSOR OF FRI 4 (367 aa).

The segment at 7–66 (RATEKVWCYYCDREFDDEKILVQHQKAKHFKCHVCHKKLSTASGMVIHVLQVHKENVTKV) adopts a BED-type zinc-finger fold. Cys-38, Cys-41, His-54, and His-59 together coordinate Zn(2+). Residues 246–309 (PFSAPLPVGG…PPVIANKAPS (64 aa)) are disordered. Positions 273 to 295 (PNNSIPGGTNAHSYASGPNTSGP) are enriched in polar residues.

In terms of assembly, homodimer. Component of the transcription activator complex FRI-C composed of FRI, FRL1, SUF4, FLX and FES1. Interacts with LD, ASHH2, FRL1, (via C-terminus) with FRI (via C-terminus), and with SWC6, a component of the SWR1 chromatin-remodeling complex. Binds to MED18 to regulate flowering time; recruits MED18 to FLC promoter. As to expression, expressed in root, shoot apex, leaves, stem and flowers. Expressed in expanding leaves, in the vasculature of fully expanded leaves, in the inflorescence, throughout young floral primordia, in the carpels of older flowers and in fertilized ovules.

The protein resides in the nucleus. Its function is as follows. Sequence-specific DNA binding factor that recognizes the 5'-CCAAATTTTAAGTTT-3' sequence. Recruits the FRI-C complex to the FLC promoter. Required for FRI-mediated FLC activation, but has no effect on the expression of MAF1, MAF2, MAF3, MAF5, UFC and CO. Dispensable for the reactivation of FLC in early embryogenesis, but required to maintain high levels of FLC expression in later embryonic and vegetative development. In Arabidopsis thaliana (Mouse-ear cress), this protein is Protein SUPPRESSOR OF FRI 4.